A 181-amino-acid chain; its full sequence is UPF0200 protein Ta0179 (181 aa).

6-13 (GMPGAGKD) contributes to the ATP binding site.

It belongs to the UPF0200 family.

This is UPF0200 protein Ta0179 from Thermoplasma acidophilum (strain ATCC 25905 / DSM 1728 / JCM 9062 / NBRC 15155 / AMRC-C165).